The sequence spans 421 residues: Probable G-protein coupled receptor 151 (421 aa).

Residues 1 to 44 are Extracellular-facing; it reads MGKATLAVFADSDSSNMNESFAHLHFAGGYLPSDSKGWRTIIPS. Asparagine 18 is a glycosylation site (N-linked (GlcNAc...) asparagine). The chain crosses the membrane as a helical span at residues 45 to 65; that stretch reads LLAAVCLVGFVGNLCVIGLLL. Over 66–74 the chain is Cytoplasmic; the sequence is HGVWKRKPS. The chain crosses the membrane as a helical span at residues 75–95; it reads MIHSLILNLSLADISLLLFSA. Over 96-122 the chain is Extracellular; sequence PVRATAYVKGVWDLGWFVCKSSDWFTH. A disulfide bond links cysteine 114 and cysteine 190. A helical transmembrane segment spans residues 123 to 143; it reads MCMAAKSLTFVVVAKVCFMYA. Residues 144 to 156 are Cytoplasmic-facing; sequence SDPAKPVGTHNCT. A helical membrane pass occupies residues 157-177; it reads IWSLLGAIWVVASLLPLPEWF. Over 178–204 the chain is Extracellular; the sequence is FSTTRHHAGVEMCLVDVPAVAAEFMSL. A helical membrane pass occupies residues 205–225; sequence FGKLYPLLVFCLPLLLAGFYF. Residues 226-258 are Cytoplasmic-facing; sequence WRAYNQCKIRCAKTQNLRNQMRSKQLTVMLLST. Residues 259–279 form a helical membrane-spanning segment; that stretch reads AVTSALLWLPEWIAWLWVWHL. Residues 280 to 289 are Extracellular-facing; sequence KAGGPMPPQG. The helical transmembrane segment at 290-310 threads the bilayer; that stretch reads FIALSQVLMFSISTVNPLIFL. At 311–421 the chain is on the cytoplasmic side; the sequence is MMSEEFKAGL…HEGQETKGCN (111 aa). 2 disordered regions span residues 346 to 381 and 394 to 421; these read IETL…TDKV and HERD…KGCN. Basic and acidic residues-rich tracts occupy residues 364 to 379 and 409 to 421; these read DTDR…ETTD and PWEH…KGCN.

The protein belongs to the G-protein coupled receptor 1 family. As to expression, exclusively expressed in neurons of the habenular complex. The expression is particularly prominent in the medial habenular nucleus, whereas the lateral habenular nucleus exhibited a lower level of expression.

It is found in the cell membrane. Orphan receptor. This Rattus norvegicus (Rat) protein is Probable G-protein coupled receptor 151 (Gpr151).